The sequence spans 467 residues: Probable serine hydroxymethyltransferase, cytosolic (467 aa).

N6-(pyridoxal phosphate)lysine is present on K243.

It belongs to the SHMT family. Homotetramer. Pyridoxal 5'-phosphate is required as a cofactor.

The protein resides in the cytoplasm. The enzyme catalyses (6R)-5,10-methylene-5,6,7,8-tetrahydrofolate + glycine + H2O = (6S)-5,6,7,8-tetrahydrofolate + L-serine. Its pathway is one-carbon metabolism; tetrahydrofolate interconversion. Interconversion of serine and glycine. The polypeptide is Probable serine hydroxymethyltransferase, cytosolic (Schizosaccharomyces pombe (strain 972 / ATCC 24843) (Fission yeast)).